Consider the following 520-residue polypeptide: GMP synthase [glutamine-hydrolyzing] (520 aa).

The Glutamine amidotransferase type-1 domain maps to 9-202; the sequence is KILILDFGSQ…VRKICGCSGK (194 aa). Cys-86 functions as the Nucleophile in the catalytic mechanism. Catalysis depends on residues His-176 and Glu-178. One can recognise a GMPS ATP-PPase domain in the interval 203–395; that stretch reads WTPGQIIEDA…LGLPHQMVWR (193 aa). 230 to 236 is an ATP binding site; sequence SGGVDSS.

As to quaternary structure, homodimer.

The enzyme catalyses XMP + L-glutamine + ATP + H2O = GMP + L-glutamate + AMP + diphosphate + 2 H(+). Its pathway is purine metabolism; GMP biosynthesis; GMP from XMP (L-Gln route): step 1/1. Its function is as follows. Catalyzes the synthesis of GMP from XMP. The chain is GMP synthase [glutamine-hydrolyzing] from Geotalea daltonii (strain DSM 22248 / JCM 15807 / FRC-32) (Geobacter daltonii).